The sequence spans 449 residues: Exodeoxyribonuclease 7 large subunit (449 aa).

This sequence belongs to the XseA family. As to quaternary structure, heterooligomer composed of large and small subunits.

It is found in the cytoplasm. It carries out the reaction Exonucleolytic cleavage in either 5'- to 3'- or 3'- to 5'-direction to yield nucleoside 5'-phosphates.. Functionally, bidirectionally degrades single-stranded DNA into large acid-insoluble oligonucleotides, which are then degraded further into small acid-soluble oligonucleotides. This is Exodeoxyribonuclease 7 large subunit from Salmonella typhi.